The chain runs to 188 residues: Ion-translocating oxidoreductase complex subunit B (188 aa).

The segment at 1-26 (MNGVFLAIGALLPICLAGGALLGYAA) is hydrophobic. The 59-residue stretch at 32-90 (QGDPVAEQVNALLPQTQCGQCGYPGCKPYAEAIAAGDKINKCPPGGEATIRALADLLDL) folds into the 4Fe-4S domain. Cys49, Cys52, Cys57, Cys73, Cys113, Cys116, Cys119, Cys123, Cys143, Cys146, Cys149, and Cys153 together coordinate [4Fe-4S] cluster. 4Fe-4S ferredoxin-type domains are found at residues 104-133 (RVAYIREAECIGCTKCIQACPVDAIVGAAR) and 134-163 (LMHTVIADECTGCDLCLEPCPVDCIEMREI).

It belongs to the 4Fe4S bacterial-type ferredoxin family. RnfB subfamily. In terms of assembly, the complex is composed of six subunits: RnfA, RnfB, RnfC, RnfD, RnfE and RnfG. The cofactor is [4Fe-4S] cluster.

The protein localises to the cell inner membrane. In terms of biological role, part of a membrane-bound complex that couples electron transfer with translocation of ions across the membrane. This is Ion-translocating oxidoreductase complex subunit B from Pseudomonas aeruginosa (strain LESB58).